The following is a 176-amino-acid chain: MDLPGPIHDFLLVFLGSGLLFGSIGVVLFTNPIFSAFSLGFVLVCISLLYILSNSHFVAAAQLLIYVGAITVLIIFAVMFMNDSEYSTDLNRWTVGDGITSLICTTILFSLISTILDTSWYGVIWTTRLNQILEQDLISNSQQIGIHLSTDFFLPFELISIILLVALIGAISVARQ.

The next 5 membrane-spanning stretches (helical) occupy residues 10 to 30 (FLLVFLGSGLLFGSIGVVLFT), 32 to 52 (PIFSAFSLGFVLVCISLLYIL), 61 to 81 (AQLLIYVGAITVLIIFAVMFM), 95 to 115 (VGDGITSLICTTILFSLISTI), and 152 to 172 (FFLPFELISIILLVALIGAIS).

It belongs to the complex I subunit 6 family. NDH is composed of at least 16 different subunits, 5 of which are encoded in the nucleus.

It is found in the plastid. It localises to the chloroplast thylakoid membrane. It carries out the reaction a plastoquinone + NADH + (n+1) H(+)(in) = a plastoquinol + NAD(+) + n H(+)(out). It catalyses the reaction a plastoquinone + NADPH + (n+1) H(+)(in) = a plastoquinol + NADP(+) + n H(+)(out). In terms of biological role, NDH shuttles electrons from NAD(P)H:plastoquinone, via FMN and iron-sulfur (Fe-S) centers, to quinones in the photosynthetic chain and possibly in a chloroplast respiratory chain. The immediate electron acceptor for the enzyme in this species is believed to be plastoquinone. Couples the redox reaction to proton translocation, and thus conserves the redox energy in a proton gradient. This is NAD(P)H-quinone oxidoreductase subunit 6, chloroplastic (ndhG) from Aethionema grandiflorum (Persian stone-cress).